We begin with the raw amino-acid sequence, 338 residues long: Fructose-1,6-bisphosphatase class 1 (338 aa).

E90, D112, L114, and D115 together coordinate Mg(2+). Residues 115–118 (DGSS), N207, and K273 contribute to the substrate site. E279 serves as a coordination point for Mg(2+).

Belongs to the FBPase class 1 family. In terms of assembly, homotetramer. Mg(2+) serves as cofactor.

It localises to the cytoplasm. It catalyses the reaction beta-D-fructose 1,6-bisphosphate + H2O = beta-D-fructose 6-phosphate + phosphate. Its pathway is carbohydrate biosynthesis; gluconeogenesis. The chain is Fructose-1,6-bisphosphatase class 1 from Stenotrophomonas maltophilia (strain R551-3).